A 278-amino-acid chain; its full sequence is Endoplasmic reticulum junction formation protein lunapark (278 aa).

Over 1 to 45 the chain is Cytoplasmic; the sequence is MFSALGKWVRGSRNDKDFVTKYTADLSQITSQIHQLDVALKKSQS. The helical transmembrane segment at 46–66 threads the bilayer; the sequence is ILSQWQSNLTFYGIALTVLAL. Over 67 to 77 the chain is Lumenal; the sequence is SYTYWEYHGYR. A helical transmembrane segment spans residues 78 to 98; the sequence is PYLVVTALLCIGSLILFKWAL. Residues 99–278 are Cytoplasmic-facing; it reads TKLYAFYNNN…PSQSEKEKTK (180 aa). Positions 107 to 183 form a coiled coil; that stretch reads NNRLRKLAKL…ELEKFKKESH (77 aa). A C4-type; plays a role in ER morphology zinc finger spans residues 223–247; that stretch reads CPQCHWKSNCYRLASKPIIFICPHC. The interval 258–278 is disordered; sequence EDAIEAKQPAQPSQSEKEKTK.

Belongs to the lunapark family. Interacts with RTN1; this interaction is negatively regulated by SEY1. Interacts with SEY1 and YOP1.

It localises to the endoplasmic reticulum membrane. Functionally, plays a role in tubular endoplasmic reticulum network formation and maintenance. Works in conjunction with the ER shaping proteins (reticulons RTN1 and RTN2, YOP1), and in antagonism to SEY1 to maintain the network in a dynamic equilibrium. May counterbalance SEY1-directed polygon formation by promoting polygon loss through ring closure. This is Endoplasmic reticulum junction formation protein lunapark (LNP1) from Saccharomyces cerevisiae (strain ATCC 204508 / S288c) (Baker's yeast).